The sequence spans 315 residues: 4-hydroxy-3-methylbut-2-enyl diphosphate reductase (315 aa).

Residue Cys-12 participates in [4Fe-4S] cluster binding. His-41 and His-74 together coordinate (2E)-4-hydroxy-3-methylbut-2-enyl diphosphate. Residues His-41 and His-74 each coordinate dimethylallyl diphosphate. 2 residues coordinate isopentenyl diphosphate: His-41 and His-74. Cys-96 lines the [4Fe-4S] cluster pocket. His-124 contributes to the (2E)-4-hydroxy-3-methylbut-2-enyl diphosphate binding site. A dimethylallyl diphosphate-binding site is contributed by His-124. Isopentenyl diphosphate is bound at residue His-124. Glu-126 (proton donor) is an active-site residue. Thr-168 lines the (2E)-4-hydroxy-3-methylbut-2-enyl diphosphate pocket. Residue Cys-198 coordinates [4Fe-4S] cluster. (2E)-4-hydroxy-3-methylbut-2-enyl diphosphate-binding residues include Ser-226, Ser-227, Asn-228, and Ser-270. The dimethylallyl diphosphate site is built by Ser-226, Ser-227, Asn-228, and Ser-270. Isopentenyl diphosphate contacts are provided by Ser-226, Ser-227, Asn-228, and Ser-270.

This sequence belongs to the IspH family. Requires [4Fe-4S] cluster as cofactor.

It catalyses the reaction isopentenyl diphosphate + 2 oxidized [2Fe-2S]-[ferredoxin] + H2O = (2E)-4-hydroxy-3-methylbut-2-enyl diphosphate + 2 reduced [2Fe-2S]-[ferredoxin] + 2 H(+). It carries out the reaction dimethylallyl diphosphate + 2 oxidized [2Fe-2S]-[ferredoxin] + H2O = (2E)-4-hydroxy-3-methylbut-2-enyl diphosphate + 2 reduced [2Fe-2S]-[ferredoxin] + 2 H(+). It participates in isoprenoid biosynthesis; dimethylallyl diphosphate biosynthesis; dimethylallyl diphosphate from (2E)-4-hydroxy-3-methylbutenyl diphosphate: step 1/1. The protein operates within isoprenoid biosynthesis; isopentenyl diphosphate biosynthesis via DXP pathway; isopentenyl diphosphate from 1-deoxy-D-xylulose 5-phosphate: step 6/6. Catalyzes the conversion of 1-hydroxy-2-methyl-2-(E)-butenyl 4-diphosphate (HMBPP) into a mixture of isopentenyl diphosphate (IPP) and dimethylallyl diphosphate (DMAPP). Acts in the terminal step of the DOXP/MEP pathway for isoprenoid precursor biosynthesis. The chain is 4-hydroxy-3-methylbut-2-enyl diphosphate reductase from Azotobacter vinelandii (strain DJ / ATCC BAA-1303).